The primary structure comprises 211 residues: C-type lectin domain family 2 member L (211 aa).

The segment at 1 to 53 is disordered; that stretch reads MEPAREPPARARPPPPAARPAPAAPRPRSPAEAEARGPEGLLRRSGSGYEGST. The span at 10 to 28 shows a compositional bias: pro residues; the sequence is RARPPPPAARPAPAAPRPR. Position 29 is a phosphoserine (Ser-29). The helical transmembrane segment at 66-86 threads the bilayer; the sequence is LLLGAIAVLLFAILVVMSILA. 3 disulfide bridges follow: Cys-97–Cys-108, Cys-125–Cys-205, and Cys-184–Cys-197. The 103-residue stretch at 104-206 folds into the C-type lectin domain; it reads YGRKCYYFSE…CLTTRPWVCS (103 aa).

Its subcellular location is the membrane. In Rattus norvegicus (Rat), this protein is C-type lectin domain family 2 member L (Clec2l).